Consider the following 87-residue polypeptide: Large ribosomal subunit protein bL31B (87 aa).

The protein belongs to the bacterial ribosomal protein bL31 family. Type B subfamily. In terms of assembly, part of the 50S ribosomal subunit.

In Escherichia coli O8 (strain IAI1), this protein is Large ribosomal subunit protein bL31B.